We begin with the raw amino-acid sequence, 179 residues long: Ribosome maturation factor RimM (179 aa).

The region spanning 103-176 (EPDTYYDHQL…IVEIDPPKGL (74 aa)) is the PRC barrel domain.

The protein belongs to the RimM family. As to quaternary structure, binds ribosomal protein uS19.

Its subcellular location is the cytoplasm. In terms of biological role, an accessory protein needed during the final step in the assembly of 30S ribosomal subunit, possibly for assembly of the head region. Essential for efficient processing of 16S rRNA. May be needed both before and after RbfA during the maturation of 16S rRNA. It has affinity for free ribosomal 30S subunits but not for 70S ribosomes. The polypeptide is Ribosome maturation factor RimM (Mycobacterium leprae (strain Br4923)).